The primary structure comprises 172 residues: Adenine phosphoribosyltransferase (172 aa).

Belongs to the purine/pyrimidine phosphoribosyltransferase family. Homodimer.

Its subcellular location is the cytoplasm. The catalysed reaction is AMP + diphosphate = 5-phospho-alpha-D-ribose 1-diphosphate + adenine. Its pathway is purine metabolism; AMP biosynthesis via salvage pathway; AMP from adenine: step 1/1. Catalyzes a salvage reaction resulting in the formation of AMP, that is energically less costly than de novo synthesis. The polypeptide is Adenine phosphoribosyltransferase (Polynucleobacter necessarius subsp. necessarius (strain STIR1)).